Here is a 142-residue protein sequence, read N- to C-terminus: Small ribosomal subunit protein bS6 (142 aa).

Basic and acidic residues predominate over residues 110–133 (NKKPSHAKEKHEKTEHTHSHHAEE). The tract at residues 110-142 (NKKPSHAKEKHEKTEHTHSHHAEEAESVGSHSE) is disordered.

It belongs to the bacterial ribosomal protein bS6 family.

In terms of biological role, binds together with bS18 to 16S ribosomal RNA. The protein is Small ribosomal subunit protein bS6 of Helicobacter pylori (strain P12).